Reading from the N-terminus, the 713-residue chain is Pro-neuregulin-3, membrane-bound isoform (713 aa).

The Extracellular portion of the chain corresponds to 1 to 362; sequence MSEGAAGASP…MESEDVYQRQ (362 aa). Disordered stretches follow at residues 28-48, 119-220, and 251-282; these read AAAA…AAEP, SSFP…STQA, and AAAS…TTYS. The segment covering 34–44 has biased composition (gly residues); it reads AGGGPDGGGEG. Residues 127 to 148 show a composition bias toward low complexity; it reads TTTTTTSTTSPATPSAGGAASS. Polar residues predominate over residues 149 to 163; that stretch reads RTPNRISTRLTTITR. Composition is skewed to low complexity over residues 195–207 and 254–274; these read STTA…STPG and SSSS…STSP. Residues 288-331 form the EGF-like domain; it reads HFKPCRDKDLAYCLNDGECFVIETLTGSHKHCRCKEGYQGVRCD. 3 disulfide bridges follow: C292-C306, C300-C319, and C321-C330. A helical transmembrane segment spans residues 363–383; the sequence is VLSISCIIFGIVIVGMFCAAF. The Cytoplasmic portion of the chain corresponds to 384–713; that stretch reads YFKSKKQAKQ…EIQRDSVLTK (330 aa). Positions 449 to 496 are disordered; the sequence is SAPQSFPEVTSPDRGSQPIKHHSPGQRSGMLHRNTFRRAPPSPRSRLG.

It belongs to the neuregulin family. Interacts with ERBB4. In terms of processing, proteolytic cleavage close to the plasma membrane on the external face leads to the release of the soluble growth factor form. Post-translationally, extensive glycosylation precedes the proteolytic cleavage. As to expression, expressed in sympathetic, motor, and sensory neurons.

Its subcellular location is the cell membrane. It localises to the secreted. Its function is as follows. Direct ligand for the ERBB4 tyrosine kinase receptor. Binding results in ligand-stimulated tyrosine phosphorylation and activation of the receptor. Does not bind to the EGF receptor, ERBB2 or ERBB3 receptors. This is Pro-neuregulin-3, membrane-bound isoform (Nrg3) from Mus musculus (Mouse).